The primary structure comprises 70 residues: Cold shock-like protein CspG (70 aa).

The CSD domain occupies 7-67; the sequence is GLVKWFNEEK…GQKGLQAANV (61 aa).

It is found in the cytoplasm. The polypeptide is Cold shock-like protein CspG (cspG) (Shewanella violacea (strain JCM 10179 / CIP 106290 / LMG 19151 / DSS12)).